The primary structure comprises 315 residues: BTB/POZ domain-containing adapter for CUL3-mediated RhoA degradation protein 3 (315 aa).

M1 carries the N-acetylmethionine modification. A Phosphoserine modification is found at S23. The BTB domain occupies 32–100 (KYVKLNVGGA…LRDGAVPLPE (69 aa)). The Interaction with PCNA signature appears at 239–245 (QTKVEFP). A disordered region spans residues 269–294 (NALLEATGGAAGRSHHLDEDEERERE).

It belongs to the BACURD family. Homotetramer; forms a two-fold symmetric tetramer in solution. Interacts with CUL3; interaction is direct and forms a 5:5 heterodecamer. Component of the BCR(BACURD3) E3 ubiquitin ligase complex, at least composed of CUL3, KCTD10/BACURD3 and RBX1. Interacts with DNA polymerase delta subunit 2/POLD2. Interacts with PCNA. In terms of tissue distribution, expressed at highest levels in lung. Also detected in testis and heart. Very low expression, if any, in brain, liver, spleen, kidney and skeletal muscle.

It localises to the nucleus. The protein operates within protein modification; protein ubiquitination. In terms of biological role, substrate-specific adapter of a BCR (BTB-CUL3-RBX1) E3 ubiquitin-protein ligase complex. The BCR(BACURD3) E3 ubiquitin ligase complex mediates the ubiquitination of target proteins, leading to their degradation by the proteasome. The chain is BTB/POZ domain-containing adapter for CUL3-mediated RhoA degradation protein 3 (Kctd10) from Rattus norvegicus (Rat).